The primary structure comprises 193 residues: Large ribosomal subunit protein uL5 (193 aa).

It belongs to the universal ribosomal protein uL5 family. As to quaternary structure, part of the 50S ribosomal subunit; part of the 5S rRNA/L5/L18/L25 subcomplex. Contacts the 5S rRNA and the P site tRNA. Forms a bridge to the 30S subunit in the 70S ribosome.

Its function is as follows. This is one of the proteins that bind and probably mediate the attachment of the 5S RNA into the large ribosomal subunit, where it forms part of the central protuberance. In the 70S ribosome it contacts protein S13 of the 30S subunit (bridge B1b), connecting the 2 subunits; this bridge is implicated in subunit movement. Contacts the P site tRNA; the 5S rRNA and some of its associated proteins might help stabilize positioning of ribosome-bound tRNAs. In Corynebacterium urealyticum (strain ATCC 43042 / DSM 7109), this protein is Large ribosomal subunit protein uL5.